Here is a 208-residue protein sequence, read N- to C-terminus: OVARIAN TUMOR DOMAIN-containing deubiquitinating enzyme 2 (208 aa).

Residues 5-127 (IVRRVIPSDN…GLHYDALALS (123 aa)) enclose the OTU domain. Aspartate 13 is a catalytic residue. The Nucleophile role is filled by cysteine 16. Residues histidine 120 and histidine 201 contribute to the active site.

Belongs to the peptidase C85 family.

The catalysed reaction is Thiol-dependent hydrolysis of ester, thioester, amide, peptide and isopeptide bonds formed by the C-terminal Gly of ubiquitin (a 76-residue protein attached to proteins as an intracellular targeting signal).. Its function is as follows. Hydrolase that can remove conjugated ubiquitin from proteins in vitro and may therefore play an important regulatory role at the level of protein turnover by preventing degradation. Cysteine protease with a preference for 'Lys-63' and 'Lys-48' -linked ubiquitin (UB) tetramers as substrates. In Arabidopsis thaliana (Mouse-ear cress), this protein is OVARIAN TUMOR DOMAIN-containing deubiquitinating enzyme 2.